The sequence spans 957 residues: Glycine dehydrogenase (decarboxylating) (957 aa).

An N6-(pyridoxal phosphate)lysine modification is found at K708.

It belongs to the GcvP family. As to quaternary structure, the glycine cleavage system is composed of four proteins: P, T, L and H. It depends on pyridoxal 5'-phosphate as a cofactor.

It catalyses the reaction N(6)-[(R)-lipoyl]-L-lysyl-[glycine-cleavage complex H protein] + glycine + H(+) = N(6)-[(R)-S(8)-aminomethyldihydrolipoyl]-L-lysyl-[glycine-cleavage complex H protein] + CO2. The glycine cleavage system catalyzes the degradation of glycine. The P protein binds the alpha-amino group of glycine through its pyridoxal phosphate cofactor; CO(2) is released and the remaining methylamine moiety is then transferred to the lipoamide cofactor of the H protein. The protein is Glycine dehydrogenase (decarboxylating) of Cronobacter sakazakii (strain ATCC BAA-894) (Enterobacter sakazakii).